The sequence spans 101 residues: NADH-quinone oxidoreductase subunit K (101 aa).

3 consecutive transmembrane segments (helical) span residues 4-24 (VGHYLAVSAVLFTLGVLGIFI), 29-49 (IIVILMAIELILLAVNINLVA), and 65-85 (FVLTVAAGEAAIGLAILVIYF).

The protein belongs to the complex I subunit 4L family. In terms of assembly, NDH-1 is composed of 14 different subunits. Subunits NuoA, H, J, K, L, M, N constitute the membrane sector of the complex.

Its subcellular location is the cell inner membrane. The catalysed reaction is a quinone + NADH + 5 H(+)(in) = a quinol + NAD(+) + 4 H(+)(out). Functionally, NDH-1 shuttles electrons from NADH, via FMN and iron-sulfur (Fe-S) centers, to quinones in the respiratory chain. The immediate electron acceptor for the enzyme in this species is believed to be ubiquinone. Couples the redox reaction to proton translocation (for every two electrons transferred, four hydrogen ions are translocated across the cytoplasmic membrane), and thus conserves the redox energy in a proton gradient. This chain is NADH-quinone oxidoreductase subunit K, found in Sphingopyxis alaskensis (strain DSM 13593 / LMG 18877 / RB2256) (Sphingomonas alaskensis).